The primary structure comprises 72 residues: Small proline-rich protein 2D (72 aa).

Positions 1 to 11 (MSYQQQQCKQP) are enriched in low complexity. Positions 1 to 20 (MSYQQQQCKQPCQPPPVCPT) are disordered. Tandem repeats lie at residues 21-29 (PKCPEPCPP), 30-38 (PKCPEPCPS), and 39-47 (PKCPQPCPP). The interval 21 to 47 (PKCPEPCPPPKCPEPCPSPKCPQPCPP) is 3 X 9 AA tandem repeats of P-K-C-P-[EQ]-P-C-P-[PS]. 2 stretches are compositionally biased toward pro residues: residues 33 to 47 (PEPC…PCPP) and 56 to 72 (PVTP…PKSK). The interval 33–72 (PEPCPSPKCPQPCPPQQCQQKYPPVTPSPPCQPKCPPKSK) is disordered.

The protein belongs to the cornifin (SPRR) family.

Its subcellular location is the cytoplasm. Its function is as follows. Cross-linked envelope protein of keratinocytes. It is a keratinocyte protein that first appears in the cell cytosol, but ultimately becomes cross-linked to membrane proteins by transglutaminase. All that results in the formation of an insoluble envelope beneath the plasma membrane. This Homo sapiens (Human) protein is Small proline-rich protein 2D (SPRR2D).